The primary structure comprises 357 residues: Set1 complex component swd2 (357 aa).

4 WD repeats span residues 24 to 65, 110 to 149, 199 to 241, and 247 to 289; these read NFVG…KSLA, GHKQ…CQGL, PPHV…RVPS, and TQDG…QTVN.

This sequence belongs to the WD repeat SWD2 family. As to quaternary structure, component of the Set1 complex composed of ash2, sdc1, set1, shg1, spp1, swd1, swd2 and swd3.

Its subcellular location is the nucleus. The Set1 complex specifically methylates 'Lys-4' of histone H3. The polypeptide is Set1 complex component swd2 (Schizosaccharomyces pombe (strain 972 / ATCC 24843) (Fission yeast)).